We begin with the raw amino-acid sequence, 271 residues long: HTH-type transcriptional repressor AllR (271 aa).

Positions 21 to 83 (AQALERGIAI…SQLGWWHIGL (63 aa)) constitute an HTH iclR-type domain. The H-T-H motif DNA-binding region spans 43–62 (VSDISLNLDLPLSTTFRLLK). Positions 98–267 (VLSVAGPFMR…ARDISTALGL (170 aa)) constitute an IclR-ED domain. Residues 154–156 (SGA), aspartate 207, cysteine 217, and 234–236 (SIS) each bind glyoxylate.

Negative regulator of allantoin and glyoxylate utilization operons. Binds to the gcl promoter and to the allS-allA intergenic region. The sequence is that of HTH-type transcriptional repressor AllR (allR) from Escherichia coli (strain UTI89 / UPEC).